The chain runs to 86 residues: MSQEDKQRITVEIYNRKYHIVGEESERHMQLVADLVDQKMNEIHEVNKQLDTSSLAVLTAVNTMNDYLKLKEDYATLLGSIKKKED.

The protein belongs to the ZapA family. Type 2 subfamily. As to quaternary structure, homodimer. Interacts with FtsZ.

It localises to the cytoplasm. Its function is as follows. Activator of cell division through the inhibition of FtsZ GTPase activity, therefore promoting FtsZ assembly into bundles of protofilaments necessary for the formation of the division Z ring. It is recruited early at mid-cell but it is not essential for cell division. The protein is Cell division protein ZapA of Oceanobacillus iheyensis (strain DSM 14371 / CIP 107618 / JCM 11309 / KCTC 3954 / HTE831).